The following is a 307-amino-acid chain: Aspartate carbamoyltransferase catalytic subunit (307 aa).

The carbamoyl phosphate site is built by arginine 58 and threonine 59. An L-aspartate-binding site is contributed by lysine 86. Arginine 108, histidine 136, and glutamine 139 together coordinate carbamoyl phosphate. Residues arginine 169 and arginine 223 each coordinate L-aspartate. Carbamoyl phosphate-binding residues include glycine 264 and proline 265.

Belongs to the aspartate/ornithine carbamoyltransferase superfamily. ATCase family. In terms of assembly, heterododecamer (2C3:3R2) of six catalytic PyrB chains organized as two trimers (C3), and six regulatory PyrI chains organized as three dimers (R2).

It carries out the reaction carbamoyl phosphate + L-aspartate = N-carbamoyl-L-aspartate + phosphate + H(+). Its pathway is pyrimidine metabolism; UMP biosynthesis via de novo pathway; (S)-dihydroorotate from bicarbonate: step 2/3. Functionally, catalyzes the condensation of carbamoyl phosphate and aspartate to form carbamoyl aspartate and inorganic phosphate, the committed step in the de novo pyrimidine nucleotide biosynthesis pathway. In Syntrophus aciditrophicus (strain SB), this protein is Aspartate carbamoyltransferase catalytic subunit.